We begin with the raw amino-acid sequence, 343 residues long: 3-hydroxy-3-methylglutaryl-CoA lyase, cytoplasmic (343 aa).

Residue Gly-2 is the site of N-myristoyl glycine attachment. Positions Val-48–Met-315 constitute a Pyruvate carboxyltransferase domain. Arg-56 is a substrate binding site. The a divalent metal cation site is built by Asp-57, His-248, and His-250. Residue Cys-281 is part of the active site. Residue Asn-290 participates in a divalent metal cation binding.

The protein belongs to the HMG-CoA lyase family. The cofactor is a divalent metal cation.

It is found in the cytoplasm. It localises to the cytosol. The protein localises to the endoplasmic reticulum membrane. The catalysed reaction is (3S)-3-hydroxy-3-methylglutaryl-CoA = acetoacetate + acetyl-CoA. It participates in metabolic intermediate metabolism; (S)-3-hydroxy-3-methylglutaryl-CoA degradation; acetoacetate from (S)-3-hydroxy-3-methylglutaryl-CoA: step 1/1. Functionally, non-mitochondrial 3-hydroxy-3-methylglutaryl-CoA lyase that catalyzes a cation-dependent cleavage of (S)-3-hydroxy-3-methylglutaryl-CoA into acetyl-CoA and acetoacetate, a key step in ketogenesis, the products of which support energy production in nonhepatic animal tissues. The polypeptide is 3-hydroxy-3-methylglutaryl-CoA lyase, cytoplasmic (Hmgcll1) (Mus musculus (Mouse)).